The primary structure comprises 1360 residues: DNA-directed RNA polymerase subunit beta (1360 aa).

It belongs to the RNA polymerase beta chain family. In terms of assembly, the RNAP catalytic core consists of 2 alpha, 1 beta, 1 beta' and 1 omega subunit. When a sigma factor is associated with the core the holoenzyme is formed, which can initiate transcription.

It catalyses the reaction RNA(n) + a ribonucleoside 5'-triphosphate = RNA(n+1) + diphosphate. In terms of biological role, DNA-dependent RNA polymerase catalyzes the transcription of DNA into RNA using the four ribonucleoside triphosphates as substrates. This Ruthia magnifica subsp. Calyptogena magnifica protein is DNA-directed RNA polymerase subunit beta.